The following is a 20-amino-acid chain: Disintegrin (20 aa).

One can recognise a Disintegrin domain in the interval 1-20 (EAGEECDCGTPENPCCDAAT). Disulfide bonds link Cys6/Cys15 and Cys8/Cys16.

Belongs to the venom metalloproteinase (M12B) family. P-II subfamily. P-IIa sub-subfamily. As to quaternary structure, monomer. As to expression, expressed by the venom gland.

The protein localises to the secreted. Its function is as follows. Inhibits fibrinogen interaction with platelets. Acts by binding to alpha-IIb/beta-3 (ITGA2B/ITGB3) on the platelet surface and inhibits aggregation induced by ADP, thrombin, platelet-activating factor and collagen. The sequence is that of Disintegrin from Bothrops fonsecai (Fonseca's lancehead).